Reading from the N-terminus, the 224-residue chain is Pyridoxine/pyridoxamine 5'-phosphate oxidase (224 aa).

FMN-binding positions include 69–74 (RHVLLK), 83–84 (FT), Arg-89, Lys-90, and Gln-112. Lys-74 contacts substrate. Tyr-130, Arg-134, and Ser-138 together coordinate substrate. FMN contacts are provided by residues 148 to 149 (QS) and Trp-194. Position 200-202 (200-202 (RMH)) interacts with substrate. Arg-204 lines the FMN pocket.

This sequence belongs to the pyridoxamine 5'-phosphate oxidase family. In terms of assembly, homodimer. FMN serves as cofactor.

It carries out the reaction pyridoxamine 5'-phosphate + O2 + H2O = pyridoxal 5'-phosphate + H2O2 + NH4(+). It catalyses the reaction pyridoxine 5'-phosphate + O2 = pyridoxal 5'-phosphate + H2O2. The protein operates within cofactor metabolism; pyridoxal 5'-phosphate salvage; pyridoxal 5'-phosphate from pyridoxamine 5'-phosphate: step 1/1. It functions in the pathway cofactor metabolism; pyridoxal 5'-phosphate salvage; pyridoxal 5'-phosphate from pyridoxine 5'-phosphate: step 1/1. Functionally, catalyzes the oxidation of either pyridoxine 5'-phosphate (PNP) or pyridoxamine 5'-phosphate (PMP) into pyridoxal 5'-phosphate (PLP). The protein is Pyridoxine/pyridoxamine 5'-phosphate oxidase of Acidothermus cellulolyticus (strain ATCC 43068 / DSM 8971 / 11B).